The sequence spans 415 residues: G patch domain-containing protein 4 (415 aa).

M1 is modified (N-acetylmethionine). At T4 the chain carries Phosphothreonine. A G-patch domain is found at 11–57 (GMKFAEEQLLKHGWTQGKGLGRRENGITQALKVTLKQDNHGVGHDPA). K46 participates in a covalent cross-link: Glycyl lysine isopeptide (Lys-Gly) (interchain with G-Cter in SUMO2). T116 is modified (phosphothreonine). Disordered regions lie at residues 116–141 (TSGE…TPPK) and 191–415 (LGTS…VDLS). Basic and acidic residues predominate over residues 118 to 141 (GEEKPDRDLGNCSDVDNHEPTPPK). Residue S130 is modified to Phosphoserine. Polar residues predominate over residues 191–201 (LGTSQPLTDSE). Residues 224–239 (SLGDELLGHTDRSFRD) are compositionally biased toward basic and acidic residues. At S258 the chain carries Phosphoserine. A compositionally biased stretch (acidic residues) spans 335 to 345 (EDLDTQEEEGK). Residues 353 to 364 (RKVRRKDKRKRQ) show a composition bias toward basic residues. Basic and acidic residues predominate over residues 387–397 (AGERSRQYPKE). The span at 398-407 (RAKKKKRKRD) shows a compositional bias: basic residues.

This Mus musculus (Mouse) protein is G patch domain-containing protein 4 (Gpatch4).